Reading from the N-terminus, the 127-residue chain is Aspartate 1-decarboxylase (127 aa).

The active-site Schiff-base intermediate with substrate; via pyruvic acid is the Ser-25. Ser-25 carries the post-translational modification Pyruvic acid (Ser). Thr-57 contacts substrate. Tyr-58 acts as the Proton donor in catalysis. Residue 73–75 (GAA) participates in substrate binding.

This sequence belongs to the PanD family. As to quaternary structure, heterooctamer of four alpha and four beta subunits. It depends on pyruvate as a cofactor. Is synthesized initially as an inactive proenzyme, which is activated by self-cleavage at a specific serine bond to produce a beta-subunit with a hydroxyl group at its C-terminus and an alpha-subunit with a pyruvoyl group at its N-terminus.

The protein localises to the cytoplasm. The enzyme catalyses L-aspartate + H(+) = beta-alanine + CO2. The protein operates within cofactor biosynthesis; (R)-pantothenate biosynthesis; beta-alanine from L-aspartate: step 1/1. Catalyzes the pyruvoyl-dependent decarboxylation of aspartate to produce beta-alanine. In Shouchella clausii (strain KSM-K16) (Alkalihalobacillus clausii), this protein is Aspartate 1-decarboxylase.